The chain runs to 383 residues: Acetylornithine deacetylase (383 aa).

A Zn(2+)-binding site is contributed by His-80. The active site involves Asp-82. Asp-112 serves as a coordination point for Zn(2+). Glu-144 is a catalytic residue. 3 residues coordinate Zn(2+): Glu-145, Glu-169, and His-355.

The protein belongs to the peptidase M20A family. ArgE subfamily. Homodimer. Zn(2+) serves as cofactor. Requires Co(2+) as cofactor. Glutathione is required as a cofactor.

Its subcellular location is the cytoplasm. The enzyme catalyses N(2)-acetyl-L-ornithine + H2O = L-ornithine + acetate. It functions in the pathway amino-acid biosynthesis; L-arginine biosynthesis; L-ornithine from N(2)-acetyl-L-ornithine (linear): step 1/1. Its function is as follows. Catalyzes the hydrolysis of the amide bond of N(2)-acetylated L-amino acids. Cleaves the acetyl group from N-acetyl-L-ornithine to form L-ornithine, an intermediate in L-arginine biosynthesis pathway, and a branchpoint in the synthesis of polyamines. The protein is Acetylornithine deacetylase of Salmonella paratyphi A (strain ATCC 9150 / SARB42).